The chain runs to 1011 residues: Probable calcium-transporting ATPase (1011 aa).

At 1–65 (MLPENLPTDP…WKLVLAQFED (65 aa)) the chain is on the cytoplasmic side. The helical transmembrane segment at 66–84 (TLVRILLLAATVSFAMAVV) threads the bilayer. The Extracellular portion of the chain corresponds to 85–90 (ENNAAD). The helical transmembrane segment at 91–110 (FVEPFIILLILILNATVGVW) threads the bilayer. At 111-258 (QENRAEGAIE…QVKLDEFGVL (148 aa)) the chain is on the cytoplasmic side. Residues 259-278 (LSKVIGYICLVVFAVNLVRW) form a helical membrane-spanning segment. Residues 279–303 (YATHKPTKNETFFTRYIQPSVHCLK) are Extracellular-facing. Residues 304-321 (VAVALAVAAIPEGLPAVV) form a helical membrane-spanning segment. At 322-770 (TTCLALGTRR…RYLISSNIGE (449 aa)) the chain is on the cytoplasmic side. Aspartate 357 serves as the catalytic 4-aspartylphosphate intermediate. Lysine 514 contributes to the ATP binding site. The helical transmembrane segment at 771–794 (VVCILVTGLFGLPEALSPVQLLWV) threads the bilayer. The Extracellular portion of the chain corresponds to 795–835 (NLVTDGLPATALGFNAPDRDIMEQRPRRMEEPIVNGWLFMR). A helical transmembrane segment spans residues 836 to 856 (YMVIGVYVGLATVGGFLWWFL). Topologically, residues 857 to 885 (RHGFSWHDLTTYTACSDMTNGTCLLLANP) are cytoplasmic. Residues 886-905 (QTARAIALSILVVVEMLNAL) form a helical membrane-spanning segment. The Extracellular segment spans residues 906-922 (NALSENASLIVSRPSSN). Residues 923–942 (VWLLFAIFSSLSLHLIIMYV) traverse the membrane as a helical segment. Residues 943–1011 (PFFAKLFNIV…MEKAQEKKKD (69 aa)) lie on the Cytoplasmic side of the membrane.

The protein belongs to the cation transport ATPase (P-type) (TC 3.A.3) family.

Its subcellular location is the flagellar pocket. The protein resides in the cell membrane. It carries out the reaction Ca(2+)(in) + ATP + H2O = Ca(2+)(out) + ADP + phosphate + H(+). This magnesium-dependent enzyme catalyzes the hydrolysis of ATP coupled with the transport of the calcium. In Trypanosoma brucei brucei, this protein is Probable calcium-transporting ATPase (TBA1).